A 287-amino-acid chain; its full sequence is MTLPASPPRYAVIGNPIAHSRSPQIHAMFSAQTGRPLRYERLLAPVDGFLPTVQAFRESGGLGLNVTVPFKLEAYALAEARLSERARLAGAVNTLSWRDGAWHGCNTDGVGLVNDLLRLGVALAGARVLLVGAGGAARGVLQPLAAAGCARIHIVNRTAARAAELAAAWRAAAPRTGTQVSAGALAQAAEPGGWDVAINATASGLQDAAPDLPGGLYAPDALAYDMMYGARPTAFMRQAEADGAARCADGLGMLVGQAAESFHIWHGVRPDPGPVLLALRTELLAAG.

Residues 20–22 (SRS) and threonine 67 contribute to the shikimate site. Lysine 71 acts as the Proton acceptor in catalysis. NADP(+) is bound at residue glutamate 84. Residues asparagine 93 and aspartate 108 each coordinate shikimate. NADP(+) is bound by residues 132–136 (GAGGA), 156–161 (NRTAAR), and methionine 226. Shikimate is bound at residue tyrosine 228. Glycine 250 contacts NADP(+).

It belongs to the shikimate dehydrogenase family. As to quaternary structure, homodimer.

The catalysed reaction is shikimate + NADP(+) = 3-dehydroshikimate + NADPH + H(+). The protein operates within metabolic intermediate biosynthesis; chorismate biosynthesis; chorismate from D-erythrose 4-phosphate and phosphoenolpyruvate: step 4/7. Involved in the biosynthesis of the chorismate, which leads to the biosynthesis of aromatic amino acids. Catalyzes the reversible NADPH linked reduction of 3-dehydroshikimate (DHSA) to yield shikimate (SA). This chain is Shikimate dehydrogenase (NADP(+)), found in Bordetella bronchiseptica (strain ATCC BAA-588 / NCTC 13252 / RB50) (Alcaligenes bronchisepticus).